Consider the following 153-residue polypeptide: Urease accessory protein UreE (153 aa).

It belongs to the UreE family.

The protein localises to the cytoplasm. Its function is as follows. Involved in urease metallocenter assembly. Binds nickel. Probably functions as a nickel donor during metallocenter assembly. This chain is Urease accessory protein UreE, found in Acetivibrio thermocellus (strain ATCC 27405 / DSM 1237 / JCM 9322 / NBRC 103400 / NCIMB 10682 / NRRL B-4536 / VPI 7372) (Clostridium thermocellum).